Here is a 1341-residue protein sequence, read N- to C-terminus: Restriction of telomere capping protein 1 (1341 aa).

A disordered region spans residues 1–39; the sequence is MSLSPHVENASIPKGSTPIPKNRNVSSIGKGEFLGSSSS. WD repeat units lie at residues 207 to 248, 256 to 296, 305 to 342, 367 to 406, 439 to 486, and 489 to 527; these read NKFS…SIDN, EHTR…SKSS, TASDSIRDVKWMPGYNFASKNDQGSSTYGNLKSGYKFA, AHTGPGLCLNWHPNQEYIATGGRDGKCCLWFVGDNANAAE, NTGY…IPKH, and LSETPSLGLVWWDENLIFNIDKGTRINGWDINKEPTVLE. Disordered stretches follow at residues 559 to 593, 600 to 619, 630 to 651, 736 to 765, and 789 to 830; these read PELQPTSSTTCKKHPGTIKNPKNGNPENQGIIGGI, TGLTSFTPERPPTLKAGPTF, ASSFNSSSASLTSLTPQTENRE, KNATETHGDNTTTTNNNDDGDDDDDDDDDD, and NEKV…DRAR. The span at 630–644 shows a compositional bias: low complexity; it reads ASSFNSSSASLTSLT. Residues 753–765 show a composition bias toward acidic residues; sequence DDGDDDDDDDDDD. Residues 814-823 show a composition bias toward low complexity; it reads SSISSISASR. One copy of the WD 7 repeat lies at 843-883; the sequence is KIQTLVDLISIATHNASVYLSIDDLTNFKIWILIRDSLLWD. Disordered stretches follow at residues 941-962 and 1013-1043; these read AFRANSDEPSDAEKKPVSKLKE and DEHEHQEEEQPHDSPTKSAQFHASPIAKSIP. 2 stretches are compositionally biased toward basic and acidic residues: residues 951-962 and 1015-1027; these read DAEKKPVSKLKE and HEHQEEEQPHDSP. A phosphoserine mark is found at Ser1036, Ser1080, Ser1087, Ser1089, Ser1123, and Ser1133. WD repeat units lie at residues 1129 to 1169 and 1216 to 1255; these read SRPD…KQLY and LFGIAADVLKYCPFEDIMGSEGDQSSIRLFCERCGELITN. An RING-type; degenerate zinc finger spans residues 1293-1335; sequence CVLCERPLKKLTMVILPCGHEGHFQCIQEWFLDENEQECPGGC.

Belongs to the WD repeat RTC1 family. As to quaternary structure, component of the SEA complex composed of at least IML1/SEA1, RTC1/SEA2, MTC5/SEA3, NPR2, NPR3, SEA4, SEC13 and SEH1. Interacts with ribosomes.

It localises to the vacuole membrane. Component of the SEA complex which coats the vacuolar membrane and is involved in intracellular trafficking, autophagy, response to nitrogen starvation, and amino acid biogenesis. May be involved in a process influencing telomere capping. The chain is Restriction of telomere capping protein 1 (RTC1) from Saccharomyces cerevisiae (strain ATCC 204508 / S288c) (Baker's yeast).